Here is a 74-residue protein sequence, read N- to C-terminus: ATP synthase subunit c (74 aa).

The next 2 membrane-spanning stretches (helical) occupy residues 8-28 (FIGVGLMAIGMYGAALGVSNI) and 52-72 (IGAGLAEAIGLFSFVIAMLLI).

It belongs to the ATPase C chain family. F-type ATPases have 2 components, F(1) - the catalytic core - and F(0) - the membrane proton channel. F(1) has five subunits: alpha(3), beta(3), gamma(1), delta(1), epsilon(1). F(0) has three main subunits: a(1), b(2) and c(10-14). The alpha and beta chains form an alternating ring which encloses part of the gamma chain. F(1) is attached to F(0) by a central stalk formed by the gamma and epsilon chains, while a peripheral stalk is formed by the delta and b chains.

The protein resides in the cell inner membrane. Functionally, f(1)F(0) ATP synthase produces ATP from ADP in the presence of a proton or sodium gradient. F-type ATPases consist of two structural domains, F(1) containing the extramembraneous catalytic core and F(0) containing the membrane proton channel, linked together by a central stalk and a peripheral stalk. During catalysis, ATP synthesis in the catalytic domain of F(1) is coupled via a rotary mechanism of the central stalk subunits to proton translocation. Its function is as follows. Key component of the F(0) channel; it plays a direct role in translocation across the membrane. A homomeric c-ring of between 10-14 subunits forms the central stalk rotor element with the F(1) delta and epsilon subunits. This chain is ATP synthase subunit c, found in Rickettsia canadensis (strain McKiel).